Consider the following 240-residue polypeptide: Proline-rich antigen homolog (240 aa).

Pro residues-rich tracts occupy residues 1–31 (MTEQ…PAAP) and 38–78 (APPP…PPGP). A disordered region spans residues 1–78 (MTEQPPPGGS…GGYAPPPPGP (78 aa)). The region spanning 89–233 (TPWITRVLAA…KRQTLADKIM (145 aa)) is the RDD domain. The next 3 membrane-spanning stretches (helical) occupy residues 98–118 (AFID…IMLV), 142–162 (SMIG…YLVW), and 203–223 (LAHF…LWDA).

It belongs to the mycobacterial Pra family.

It is found in the cell membrane. The protein is Proline-rich antigen homolog of Mycobacterium tuberculosis (strain CDC 1551 / Oshkosh).